The primary structure comprises 307 residues: Acetyl-coenzyme A carboxylase carboxyl transferase subunit beta (307 aa).

A CoA carboxyltransferase N-terminal domain is found at 25–294 (LWIKDPESGE…TEENGSRRLP (270 aa)).

This sequence belongs to the AccD/PCCB family. Acetyl-CoA carboxylase is a heterohexamer composed of biotin carboxyl carrier protein (AccB), biotin carboxylase (AccC) and two subunits each of ACCase subunit alpha (AccA) and ACCase subunit beta (AccD).

Its subcellular location is the cytoplasm. The enzyme catalyses N(6)-carboxybiotinyl-L-lysyl-[protein] + acetyl-CoA = N(6)-biotinyl-L-lysyl-[protein] + malonyl-CoA. It functions in the pathway lipid metabolism; malonyl-CoA biosynthesis; malonyl-CoA from acetyl-CoA: step 1/1. Its function is as follows. Component of the acetyl coenzyme A carboxylase (ACC) complex. Biotin carboxylase (BC) catalyzes the carboxylation of biotin on its carrier protein (BCCP) and then the CO(2) group is transferred by the transcarboxylase to acetyl-CoA to form malonyl-CoA. The sequence is that of Acetyl-coenzyme A carboxylase carboxyl transferase subunit beta from Chelativorans sp. (strain BNC1).